We begin with the raw amino-acid sequence, 276 residues long: Large ribosomal subunit protein uL2 (276 aa).

Disordered stretches follow at residues 30-52 (VKGL…TTSR) and 224-257 (VMNP…KGYK). Positions 41 to 52 (GGRNNHGRTTSR) are enriched in polar residues.

It belongs to the universal ribosomal protein uL2 family. In terms of assembly, part of the 50S ribosomal subunit. Forms a bridge to the 30S subunit in the 70S ribosome.

Functionally, one of the primary rRNA binding proteins. Required for association of the 30S and 50S subunits to form the 70S ribosome, for tRNA binding and peptide bond formation. It has been suggested to have peptidyltransferase activity; this is somewhat controversial. Makes several contacts with the 16S rRNA in the 70S ribosome. This Gluconacetobacter diazotrophicus (strain ATCC 49037 / DSM 5601 / CCUG 37298 / CIP 103539 / LMG 7603 / PAl5) protein is Large ribosomal subunit protein uL2.